A 689-amino-acid polypeptide reads, in one-letter code: Elongation factor G (689 aa).

A tr-type G domain is found at 8-282 (ENTRNLGIMA…AVVDYLPSPL (275 aa)). Residues 17 to 24 (AHIDAGKT), 81 to 85 (DTPGH), and 135 to 138 (NKMD) each bind GTP.

It belongs to the TRAFAC class translation factor GTPase superfamily. Classic translation factor GTPase family. EF-G/EF-2 subfamily.

Its subcellular location is the cytoplasm. In terms of biological role, catalyzes the GTP-dependent ribosomal translocation step during translation elongation. During this step, the ribosome changes from the pre-translocational (PRE) to the post-translocational (POST) state as the newly formed A-site-bound peptidyl-tRNA and P-site-bound deacylated tRNA move to the P and E sites, respectively. Catalyzes the coordinated movement of the two tRNA molecules, the mRNA and conformational changes in the ribosome. The protein is Elongation factor G of Mesoplasma florum (strain ATCC 33453 / NBRC 100688 / NCTC 11704 / L1) (Acholeplasma florum).